A 385-amino-acid polypeptide reads, in one-letter code: UDP-N-acetylglucosamine--N-acetylmuramyl-(pentapeptide) pyrophosphoryl-undecaprenol N-acetylglucosamine transferase (385 aa).

Residues 24-26 (TAG), Asn-143, Arg-180, Ser-214, and Gln-310 each bind UDP-N-acetyl-alpha-D-glucosamine.

This sequence belongs to the glycosyltransferase 28 family. MurG subfamily.

The protein resides in the cell membrane. The catalysed reaction is di-trans,octa-cis-undecaprenyl diphospho-N-acetyl-alpha-D-muramoyl-L-alanyl-D-glutamyl-meso-2,6-diaminopimeloyl-D-alanyl-D-alanine + UDP-N-acetyl-alpha-D-glucosamine = di-trans,octa-cis-undecaprenyl diphospho-[N-acetyl-alpha-D-glucosaminyl-(1-&gt;4)]-N-acetyl-alpha-D-muramoyl-L-alanyl-D-glutamyl-meso-2,6-diaminopimeloyl-D-alanyl-D-alanine + UDP + H(+). Its pathway is cell wall biogenesis; peptidoglycan biosynthesis. Functionally, cell wall formation. Catalyzes the transfer of a GlcNAc subunit on undecaprenyl-pyrophosphoryl-MurNAc-pentapeptide (lipid intermediate I) to form undecaprenyl-pyrophosphoryl-MurNAc-(pentapeptide)GlcNAc (lipid intermediate II). This is UDP-N-acetylglucosamine--N-acetylmuramyl-(pentapeptide) pyrophosphoryl-undecaprenol N-acetylglucosamine transferase from Mycolicibacterium smegmatis (strain ATCC 700084 / mc(2)155) (Mycobacterium smegmatis).